A 231-amino-acid chain; its full sequence is Adenosylcobinamide-GDP ribazoletransferase (231 aa).

The next 6 helical transmembrane spans lie at L24–L44, L46–L66, I96–L116, L159–F176, L181–L198, and L209–W229.

The protein belongs to the CobS family. Mg(2+) is required as a cofactor.

Its subcellular location is the cell membrane. The catalysed reaction is alpha-ribazole + adenosylcob(III)inamide-GDP = adenosylcob(III)alamin + GMP + H(+). It catalyses the reaction alpha-ribazole 5'-phosphate + adenosylcob(III)inamide-GDP = adenosylcob(III)alamin 5'-phosphate + GMP + H(+). The protein operates within cofactor biosynthesis; adenosylcobalamin biosynthesis; adenosylcobalamin from cob(II)yrinate a,c-diamide: step 7/7. Its function is as follows. Joins adenosylcobinamide-GDP and alpha-ribazole to generate adenosylcobalamin (Ado-cobalamin). Also synthesizes adenosylcobalamin 5'-phosphate from adenosylcobinamide-GDP and alpha-ribazole 5'-phosphate. In Thermococcus kodakarensis (strain ATCC BAA-918 / JCM 12380 / KOD1) (Pyrococcus kodakaraensis (strain KOD1)), this protein is Adenosylcobinamide-GDP ribazoletransferase.